We begin with the raw amino-acid sequence, 1085 residues long: Solute carrier family 12 member 4 (1085 aa).

At 1–119 (MPHFTVVPVD…RRAAKAPSMG (119 aa)) the chain is on the cytoplasmic side. A phosphoserine mark is found at S24, S47, S51, S81, and S88. Positions 32-56 (AEREDSDGQGNHRENSPFLSPLDAS) are disordered. A discontinuously helical transmembrane segment spans residues 120–141 (TLMGVYLPCLQNIFGVILFLRL). N131 and I132 together coordinate K(+). The Extracellular segment spans residues 142-149 (TWMVGTAG). Residues 150-172 (VLQALLIVLICCCCTLLTAISMS) form a helical membrane-spanning segment. The Cytoplasmic portion of the chain corresponds to 173–196 (AIATNGVVPAGGSYFMISRSLGPE). A helical transmembrane segment spans residues 197–225 (FGGAVGLCFYLGTTFAAAMYILGAIEILL). Y216 serves as a coordination point for K(+). Over 226-248 (TYIAPPAAIFYPSGTHDMSSATL) the chain is Extracellular. Helical transmembrane passes span 249 to 271 (NNMRVYGTIFLTFMTLVVFVGVK) and 272 to 297 (YVNKFASLFLACVIISILSIYVGGIK). Residues 298–419 (SAFDPPVFPV…LYVVADIATS (122 aa)) lie on the Extracellular side of the membrane. A disulfide bridge links C308 with C323. Residues N312, N331, and N347 are each glycosylated (N-linked (GlcNAc...) asparagine). C343 and C353 are oxidised to a cystine. The chain crosses the membrane as a helical span at residues 420–440 (FTVLVGIFFPSVTGIMAGSNR). Residues P429 and T432 each contribute to the K(+) site. Positions 433, 434, and 435 each coordinate chloride. At 441-450 (SGDLRDAQKS) the chain is on the cytoplasmic side. Residues 451 to 473 (IPVGTILAIVTTSLVYFSSVILF) traverse the membrane as a helical segment. At 474–504 (GACIEGVVLRDKYGDGVSRNLVVGTLAWPSP) the chain is on the extracellular side. The chain crosses the membrane as a helical span at residues 505 to 531 (WVIVVGSFFSTCGAGLQSLTGAPRLLQ). Over 532-554 (AIAKDNIIPFLRVFGHGKANGEP) the chain is Cytoplasmic. The next 2 membrane-spanning stretches (helical) occupy residues 555 to 575 (TWALLLTALIAELGILIASLD) and 576 to 598 (MVAPILSMFFLMCYLFVNLACAV). Chloride is bound at residue Y589. The Cytoplasmic portion of the chain corresponds to 599–612 (QTLLRTPNWRPRFK). The next 2 helical transmembrane spans lie at 613–635 (YYHWALSFLGMSLCLALMFVSSW) and 636–651 (YYALVAMVIAGMIYKY). At 652-1085 (IEYQGAEKEW…GGREVITIYS (434 aa)) the chain is on the cytoplasmic side. The scissor helix stretch occupies residues 665–681 (IRGLSLSAARYALLRLE). Residues L697, K699, K707, Y708, and V730 each contribute to the ATP site. At S734 the chain carries Phosphoserine. ATP contacts are provided by G794, W795, and Y797. Phosphoserine occurs at positions 916 and 967. Phosphothreonine is present on T983. Phosphoserine is present on S1050.

Belongs to the SLC12A transporter family. K/Cl co-transporter subfamily. As to quaternary structure, homodimer; adopts a domain-swap conformation at the scissor helices connecting the transmembrane domain and C-terminal domain. Heterodimer with other K-Cl cotransporters. N-glycosylated. Post-translationally, phosphorylated, phosphorylation may regulate transporter activity. Ubiquitous.

Its subcellular location is the cell membrane. It carries out the reaction K(+)(in) + chloride(in) = K(+)(out) + chloride(out). Its activity is regulated as follows. Inhibited by WNK3. Functionally, mediates electroneutral potassium-chloride cotransport when activated by cell swelling. May contribute to cell volume homeostasis in single cells. May be involved in the regulation of basolateral Cl(-) exit in NaCl absorbing epithelia. This Rattus norvegicus (Rat) protein is Solute carrier family 12 member 4 (Slc12a4).